A 182-amino-acid chain; its full sequence is Ribosome maturation factor RimM (182 aa).

One can recognise a PRC barrel domain in the interval 102 to 182; the sequence is EEGDYYWKDL…TIEVDWDPGF (81 aa).

Belongs to the RimM family. Binds ribosomal protein uS19.

The protein resides in the cytoplasm. Functionally, an accessory protein needed during the final step in the assembly of 30S ribosomal subunit, possibly for assembly of the head region. Essential for efficient processing of 16S rRNA. May be needed both before and after RbfA during the maturation of 16S rRNA. It has affinity for free ribosomal 30S subunits but not for 70S ribosomes. The polypeptide is Ribosome maturation factor RimM (Salmonella gallinarum (strain 287/91 / NCTC 13346)).